Consider the following 77-residue polypeptide: Acyl carrier protein (77 aa).

Positions Ala2–Gln77 constitute a Carrier domain. Ser37 is modified (O-(pantetheine 4'-phosphoryl)serine).

The protein belongs to the acyl carrier protein (ACP) family. Post-translationally, 4'-phosphopantetheine is transferred from CoA to a specific serine of apo-ACP by AcpS. This modification is essential for activity because fatty acids are bound in thioester linkage to the sulfhydryl of the prosthetic group.

The protein resides in the cytoplasm. The protein operates within lipid metabolism; fatty acid biosynthesis. In terms of biological role, carrier of the growing fatty acid chain in fatty acid biosynthesis. This is Acyl carrier protein from Shouchella clausii (strain KSM-K16) (Alkalihalobacillus clausii).